The chain runs to 521 residues: Formate--tetrahydrofolate ligase (521 aa).

It belongs to the formate--tetrahydrofolate ligase family.

It carries out the reaction (6S)-5,6,7,8-tetrahydrofolate + formate + ATP = (6R)-10-formyltetrahydrofolate + ADP + phosphate. Its pathway is one-carbon metabolism; tetrahydrofolate interconversion. In Ureaplasma parvum serovar 3 (strain ATCC 700970), this protein is Formate--tetrahydrofolate ligase.